The primary structure comprises 348 residues: NADH-ubiquinone oxidoreductase chain 2 (348 aa).

11 helical membrane passes run 3–23 (PVVL…TFIG), 25–45 (HWLL…PLMI), 67–87 (SALL…WSLL), 95–115 (ATLV…HFWL), 118–138 (VLQG…KLAP), 149–171 (LNSN…GGLN), 178–198 (ILAY…HYSP), 203–223 (LNLA…KLFN), 240–260 (LSII…LSGF), 274–294 (DLAI…FFYL), and 324–344 (LILM…PTIF).

Belongs to the complex I subunit 2 family.

The protein localises to the mitochondrion inner membrane. It carries out the reaction a ubiquinone + NADH + 5 H(+)(in) = a ubiquinol + NAD(+) + 4 H(+)(out). Its function is as follows. Core subunit of the mitochondrial membrane respiratory chain NADH dehydrogenase (Complex I) that is believed to belong to the minimal assembly required for catalysis. Complex I functions in the transfer of electrons from NADH to the respiratory chain. The immediate electron acceptor for the enzyme is believed to be ubiquinone. In Squalus acanthias (Spiny dogfish), this protein is NADH-ubiquinone oxidoreductase chain 2 (MT-ND2).